We begin with the raw amino-acid sequence, 65 residues long: uncharacterized protein (65 aa).

The tract at residues 1-30 (MPAASLESLLPPPPGKLPSPPLRPHGKFQR) is disordered. A compositionally biased stretch (pro residues) spans 10–23 (LPPPPGKLPSPPLR).

This is an uncharacterized protein from Homo sapiens (Human).